The sequence spans 150 residues: Dynein light chain Tctex-type protein 2B (150 aa).

Belongs to the dynein light chain Tctex-type family.

Its subcellular location is the dynein axonemal particle. In terms of biological role, acts as one of several non-catalytic accessory components of the cytoplasmic dynein 2 complex (dynein-2 complex), a motor protein complex that drives the movement of cargos along microtubules within cilia and flagella in concert with the intraflagellar transport (IFT) system. Required for proper retrograde ciliary transport. The polypeptide is Dynein light chain Tctex-type protein 2B (dynlt2b) (Danio rerio (Zebrafish)).